The following is a 982-amino-acid chain: MEQEHVMTLKEWMEWNAHKQLQKLQSTHPELHVDIPEDIPLVPEKVPLKMRMRYRCYTLCATSTRIMFWILFFLLCFSIVTLSTIISILRYQWKEAITHPGPVLSWQVTNSHVTMGGNTSSSSRRRRDIQYHKLPVEVNISGIPQGLFFAPQPKPIFHKERTLGLSQVILIDSDTITQGHIKQQKAYLVSTINEEMEQLQKTVLPFDLPIKDPLTQKEYIEKRCFQKYGHCYVIAFNGNKVWPSQDLIQDQCPLPPRFGNNLKYRNHTIWKYYIPLPFKVSSNWTRVESYGNIRIGSFKVPDEFRQNATHGIFCSDALYSNWYPRDLPSSVQQSFAQAYITKVLMKRKKQPTLRDIAFPKELSPVGSGMLFRPINPYDICNMPRAVLLLNKTYYTFSLWEGDCGYYQHNLTLHPACKNFNRTRQDHPYACRFWRNKYDSESVQCYNNDMCYYRPLYDGTENTEDWGWLAYTDSFPSPICIEEKRIWKKNYTLSSVLAECVNQAMEYGIDEVLSKLDLIFGNLTHQSADEAFIPVNNFTWPRYEKQNKQQKTSCERKKGRRQRRSVSTENLRRIQEAGLGLANAITTVAKISDLNDQKLAKGVHLLRDHVVTLMEANLDDIVSLGEGIQIEHIHNHLTSLKLLTLENRIDWRFINDSWIQEELGVSDNIMKVIRKTARCIPYNVKQTRNLNTSTAWEIYLYYEIIIPTTIYTQNWNIKNLGHLVRNAGYLSKVWIQQPFEVLNQECGTNIYLHMEECVDQDYIICEEVMELPPCGNGTGSDCPVLTKPLTDEYLEIEPLKNGSYLVLSSTTDCGIPAYVPVVITVNDTISCFDKEFKRPLKQELKVTKYAPSVPQLELRVPRLTSLIAKIKGIQIEITSSWETIKEQVARAKAELLRLDLHEGDYPEWLQLLGEATKDVWPTISNFVSGIGNFIKDTAGGIFGTAFSFLGYVKPVLLGFVIIFCIILIIKIIGWLQNTRKKDQ.

Residues 1–63 (MEQEHVMTLK…YRCYTLCATS (63 aa)) lie on the Cytoplasmic side of the membrane. A helical; Signal-anchor for type III membrane protein membrane pass occupies residues 64 to 86 (TRIMFWILFFLLCFSIVTLSTII). At 87-953 (SILRYQWKEA…AFSFLGYVKP (867 aa)) the chain is on the lumenal side. 11 N-linked (GlcNAc...) asparagine; by host glycosylation sites follow: Asn-118, Asn-139, Asn-266, Asn-283, Asn-307, Asn-390, Asn-409, Asn-420, Asn-489, Asn-521, and Asn-536. The interval 548–567 (QQKTSCERKKGRRQRRSVST) is disordered. The fusion peptide stretch occupies residues 569–591 (NLRRIQEAGLGLANAITTVAKIS). N-linked (GlcNAc...) asparagine; by host glycans are attached at residues Asn-654, Asn-690, Asn-775, Asn-800, and Asn-825. A helical membrane pass occupies residues 954–974 (VLLGFVIIFCIILIIKIIGWL). At 975–982 (QNTRKKDQ) the chain is on the cytoplasmic side. An Endoplasmic reticulum retention signal motif is present at residues 978–980 (RKK).

As to quaternary structure, the mature envelope protein consists of a trimer of SU-TM heterodimers. The N-terminus of leader peptide specifically interacts with Gag protein. This specific interaction between Gag protein and Env glycoprotein may allow particle egress. Envelope glycoproteins are synthesized as an inactive precursor that is processed by host furin or a furin-like protease to yield a functional hetero-oligomeric complex. A 9 kDa protein corresponding to the N-terminus of the leader peptide may arise through low efficient cleavage by host signal peptidase. Post-translationally, the transmembrane protein and the surface protein are N-glycosylated.

Its subcellular location is the host endoplasmic reticulum membrane. It localises to the virion membrane. In terms of biological role, the surface protein (SU) attaches the virus to the host cell by binding to the cell receptor. This interaction triggers the refolding of transmembrane protein (TM) and is thought to activate its fusogenic potential by unmasking its fusion peptide. The transmembrane protein (TM) acts as a class I viral fusion protein. Under the current model, the protein has at least 3 conformational states: pre-fusion native state, pre-hairpin intermediate state, and post-fusion hairpin state. During viral and target cell membrane fusion, the coiled coil regions (heptad repeats) assume a trimer-of-hairpins structure, positioning the fusion peptide in close proximity to the C-terminal region of the ectodomain. The formation of this structure appears to drive apposition and subsequent fusion of viral and target cell membranes. Membranes fusion leads to delivery of the nucleocapsid into the cytoplasm. Functionally, the leader peptide is a component of released, infectious virions and is required for particle budding. This Feline foamy virus (FFV) protein is Envelope glycoprotein gp130 (env).